Consider the following 258-residue polypeptide: Regulatory protein RecX (258 aa).

The protein belongs to the RecX family.

It is found in the cytoplasm. Modulates RecA activity. The polypeptide is Regulatory protein RecX (Streptococcus pyogenes serotype M2 (strain MGAS10270)).